A 37-amino-acid polypeptide reads, in one-letter code: Large ribosomal subunit protein bL36 (37 aa).

This sequence belongs to the bacterial ribosomal protein bL36 family.

The protein is Large ribosomal subunit protein bL36 (rpmJ) of Mycobacterium tuberculosis (strain ATCC 25618 / H37Rv).